Reading from the N-terminus, the 196-residue chain is dTTP/UTP pyrophosphatase (196 aa).

The active-site Proton acceptor is the aspartate 73.

The protein belongs to the Maf family. YhdE subfamily. A divalent metal cation is required as a cofactor.

The protein localises to the cytoplasm. The enzyme catalyses dTTP + H2O = dTMP + diphosphate + H(+). The catalysed reaction is UTP + H2O = UMP + diphosphate + H(+). Functionally, nucleoside triphosphate pyrophosphatase that hydrolyzes dTTP and UTP. May have a dual role in cell division arrest and in preventing the incorporation of modified nucleotides into cellular nucleic acids. In Myxococcus xanthus (strain DK1622), this protein is dTTP/UTP pyrophosphatase.